We begin with the raw amino-acid sequence, 473 residues long: tRNA-2-methylthio-N(6)-dimethylallyladenosine synthase (473 aa).

Residues 5 to 125 (RKLHIKSYGC…LPQLLARADQ (121 aa)) form the MTTase N-terminal domain. [4Fe-4S] cluster is bound by residues Cys-14, Cys-50, Cys-88, Cys-166, Cys-170, and Cys-173. The region spanning 152–384 (RARGISAFVT…QQLIDSQQSA (233 aa)) is the Radical SAM core domain. The 73-residue stretch at 387 to 459 (KAAIGQTVDV…RYSLLGELAA (73 aa)) folds into the TRAM domain.

The protein belongs to the methylthiotransferase family. MiaB subfamily. As to quaternary structure, monomer. [4Fe-4S] cluster serves as cofactor.

The protein resides in the cytoplasm. It carries out the reaction N(6)-dimethylallyladenosine(37) in tRNA + (sulfur carrier)-SH + AH2 + 2 S-adenosyl-L-methionine = 2-methylsulfanyl-N(6)-dimethylallyladenosine(37) in tRNA + (sulfur carrier)-H + 5'-deoxyadenosine + L-methionine + A + S-adenosyl-L-homocysteine + 2 H(+). Functionally, catalyzes the methylthiolation of N6-(dimethylallyl)adenosine (i(6)A), leading to the formation of 2-methylthio-N6-(dimethylallyl)adenosine (ms(2)i(6)A) at position 37 in tRNAs that read codons beginning with uridine. This is tRNA-2-methylthio-N(6)-dimethylallyladenosine synthase from Rhodopseudomonas palustris (strain BisB5).